Consider the following 443-residue polypeptide: Tol-Pal system protein TolB (443 aa).

A signal peptide spans 1-31 (MMIMTTRTFFSWFIVICAFWLTSFSSVPVHA). Residues 422–443 (ERQLPTPNDASDPAWSPLLNIQ) are disordered.

Belongs to the TolB family. The Tol-Pal system is composed of five core proteins: the inner membrane proteins TolA, TolQ and TolR, the periplasmic protein TolB and the outer membrane protein Pal. They form a network linking the inner and outer membranes and the peptidoglycan layer.

It localises to the periplasm. In terms of biological role, part of the Tol-Pal system, which plays a role in outer membrane invagination during cell division and is important for maintaining outer membrane integrity. The sequence is that of Tol-Pal system protein TolB from Bartonella henselae (strain ATCC 49882 / DSM 28221 / CCUG 30454 / Houston 1) (Rochalimaea henselae).